The sequence spans 272 residues: Insulin-like growth factor-binding protein 5 (272 aa).

The N-terminal stretch at 1–20 is a signal peptide; the sequence is MVLLTAVLLLLAAYAGPAQS. Positions 23–103 constitute an IGFBP N-terminal domain; it reads SFVHCEPCDE…LHGRGVCLNE (81 aa). Cystine bridges form between cysteine 27-cysteine 53, cysteine 30-cysteine 55, cysteine 38-cysteine 56, cysteine 45-cysteine 59, cysteine 67-cysteine 80, and cysteine 74-cysteine 100. Basic and acidic residues predominate over residues 111–122; that stretch reads KIERDSREHEEP. The tract at residues 111 to 130 is disordered; sequence KIERDSREHEEPTTSEMAEE. Position 116 is a phosphoserine; by FAM20C (serine 116). A glycan (O-linked (HexNAc...) threonine) is linked at threonine 172. The Thyroglobulin type-1 domain maps to 189–263; the sequence is QGPCRRHMEA…MEYVDGDFQC (75 aa). Intrachain disulfides connect cysteine 192–cysteine 219, cysteine 230–cysteine 241, and cysteine 243–cysteine 263.

Interacts with IGF1; this interaction enhances the growth stimulatory effects of IGF1 on fibroblasts. Interacts with CAV1; this interaction allows trafficking of IGFBP5 from the plasma membrane to the nucleus. Interacts with NCL; this interaction is necessary for IGFBP5 localization to the nucleus. Cleaved by C1S in extracellular space. As to expression, osteosarcoma, and at lower levels in liver, kidney and brain.

The protein resides in the secreted. The protein localises to the cytoplasm. It is found in the nucleus. Its function is as follows. Multifunctional protein that plays a critical role in regulating the availability of IGFs to their receptors and thereby regulates IGF-mediated cellular processes including proliferation, differentiation, and apoptosis in a cell-type specific manner. Increases the cell proliferation of osteoblasts, intestinal smooth muscle cells and neuroblastoma cells. Enhances adhesion and survival of epithelial cells but decreases adhesion of mesenchymal cells. Once secreted, acts as a major mediator of mTORC1-dependent feedback inhibition of IGF1 signaling. Also plays a role in the induction of extracellular matrix (ECM) production and deposition independently of its nuclear translocation and binding to IGFs. Acts itself as a growth factor that can act independently of IGFs to regulate bone formation. Acts as a ligand for the ROR1 receptor which triggers formation of ROR1/HER2 heterodimer to enhance CREB oncogenic signaling. The polypeptide is Insulin-like growth factor-binding protein 5 (IGFBP5) (Homo sapiens (Human)).